The following is a 201-amino-acid chain: Lipopolysaccharide core heptose(II)-phosphate phosphatase (201 aa).

Residues 1-35 (MLAFILRFIKNKSYFALLAGAWVIIAGLTSQHAWS) form the signal peptide.

It belongs to the phosphoglycerate mutase family. Ais subfamily.

The protein localises to the periplasm. It participates in bacterial outer membrane biogenesis; lipopolysaccharide metabolism. Catalyzes the dephosphorylation of heptose(II) of the outer membrane lipopolysaccharide core. The chain is Lipopolysaccharide core heptose(II)-phosphate phosphatase from Salmonella arizonae (strain ATCC BAA-731 / CDC346-86 / RSK2980).